Reading from the N-terminus, the 455-residue chain is Bifunctional protein GlmU (455 aa).

Positions 1–225 are pyrophosphorylase; it reads MEVVILAAGQ…IWETLGVNSK (225 aa). Residues 6–9, lysine 20, glutamine 71, 76–77, 98–100, glycine 135, glutamate 150, asparagine 165, and asparagine 223 contribute to the UDP-N-acetyl-alpha-D-glucosamine site; these read LAAG, GT, and YGD. Aspartate 100 contributes to the Mg(2+) binding site. Asparagine 223 serves as a coordination point for Mg(2+). The linker stretch occupies residues 226-246; that stretch reads AQLAELERLHQRNIATRLMED. Residues 247 to 455 are N-acetyltransferase; sequence GVTLFDPSRI…KRPVKKKAGE (209 aa). Positions 329 and 347 each coordinate UDP-N-acetyl-alpha-D-glucosamine. Histidine 359 (proton acceptor) is an active-site residue. Tyrosine 362 and asparagine 373 together coordinate UDP-N-acetyl-alpha-D-glucosamine. Acetyl-CoA contacts are provided by residues alanine 376, 382–383, serine 401, alanine 419, and arginine 436; that span reads NY.

It in the N-terminal section; belongs to the N-acetylglucosamine-1-phosphate uridyltransferase family. In the C-terminal section; belongs to the transferase hexapeptide repeat family. As to quaternary structure, homotrimer. It depends on Mg(2+) as a cofactor.

It is found in the cytoplasm. It carries out the reaction alpha-D-glucosamine 1-phosphate + acetyl-CoA = N-acetyl-alpha-D-glucosamine 1-phosphate + CoA + H(+). The catalysed reaction is N-acetyl-alpha-D-glucosamine 1-phosphate + UTP + H(+) = UDP-N-acetyl-alpha-D-glucosamine + diphosphate. It functions in the pathway nucleotide-sugar biosynthesis; UDP-N-acetyl-alpha-D-glucosamine biosynthesis; N-acetyl-alpha-D-glucosamine 1-phosphate from alpha-D-glucosamine 6-phosphate (route II): step 2/2. It participates in nucleotide-sugar biosynthesis; UDP-N-acetyl-alpha-D-glucosamine biosynthesis; UDP-N-acetyl-alpha-D-glucosamine from N-acetyl-alpha-D-glucosamine 1-phosphate: step 1/1. The protein operates within bacterial outer membrane biogenesis; LPS lipid A biosynthesis. Its function is as follows. Catalyzes the last two sequential reactions in the de novo biosynthetic pathway for UDP-N-acetylglucosamine (UDP-GlcNAc). The C-terminal domain catalyzes the transfer of acetyl group from acetyl coenzyme A to glucosamine-1-phosphate (GlcN-1-P) to produce N-acetylglucosamine-1-phosphate (GlcNAc-1-P), which is converted into UDP-GlcNAc by the transfer of uridine 5-monophosphate (from uridine 5-triphosphate), a reaction catalyzed by the N-terminal domain. This chain is Bifunctional protein GlmU, found in Aromatoleum aromaticum (strain DSM 19018 / LMG 30748 / EbN1) (Azoarcus sp. (strain EbN1)).